Consider the following 223-residue polypeptide: Ubiquitin carboxyl-terminal hydrolase isozyme L1 (223 aa).

Met-1 bears the N-acetylmethionine mark. One can recognise a UCH catalytic domain in the interval 2 to 221 (QLKPMEINPE…VRFSAVALCK (220 aa)). Residues 5–10 (PMEINP) form an interaction with ubiquitin region. Residue Cys-90 is the Nucleophile of the active site. Phosphoserine is present on Ser-125. The active-site Proton donor is the His-161. The segment at 211 to 216 (EVRFSA) is interaction with ubiquitin. The S-farnesyl cysteine moiety is linked to residue Cys-220. The propeptide at 221-223 (KAA) is removed in mature form.

Belongs to the peptidase C12 family. As to quaternary structure, monomer. Homodimer. Interacts with COPS5 and SNCA. O-glycosylated.

It localises to the cytoplasm. The protein localises to the endoplasmic reticulum membrane. It catalyses the reaction Thiol-dependent hydrolysis of ester, thioester, amide, peptide and isopeptide bonds formed by the C-terminal Gly of ubiquitin (a 76-residue protein attached to proteins as an intracellular targeting signal).. Ubiquitin-protein hydrolase involved both in the processing of ubiquitin precursors and of ubiquitinated proteins. This enzyme is a thiol protease that recognizes and hydrolyzes a peptide bond at the C-terminal glycine of ubiquitin. Also binds to free monoubiquitin and may prevent its degradation in lysosomes. The homodimer may have ATP-independent ubiquitin ligase activity. The polypeptide is Ubiquitin carboxyl-terminal hydrolase isozyme L1 (UCHL1) (Equus caballus (Horse)).